A 196-amino-acid chain; its full sequence is MSSKEQKTPEGQAPEEIIMDQHEEIEAVEPEASAEQVDPRDEKIANLEAQLAEAQTRERDGILRVKAEMENLRRRTELDIEKAHKFALEKFINELLPVIDSLDRALEVADKANPDMSAMVEGIELTLKSMLDVVRKFGVEVISETNVPLDPNVHQAIAMVESDDVAPGNVLGIMQKGYTLNGRTIRAAMVTVAKAK.

Positions 1-39 are disordered; that stretch reads MSSKEQKTPEGQAPEEIIMDQHEEIEAVEPEASAEQVDP.

The protein belongs to the GrpE family. As to quaternary structure, homodimer.

It is found in the cytoplasm. Functionally, participates actively in the response to hyperosmotic and heat shock by preventing the aggregation of stress-denatured proteins, in association with DnaK and GrpE. It is the nucleotide exchange factor for DnaK and may function as a thermosensor. Unfolded proteins bind initially to DnaJ; upon interaction with the DnaJ-bound protein, DnaK hydrolyzes its bound ATP, resulting in the formation of a stable complex. GrpE releases ADP from DnaK; ATP binding to DnaK triggers the release of the substrate protein, thus completing the reaction cycle. Several rounds of ATP-dependent interactions between DnaJ, DnaK and GrpE are required for fully efficient folding. The protein is Protein GrpE of Escherichia coli (strain SMS-3-5 / SECEC).